The primary structure comprises 199 residues: Crossover junction endodeoxyribonuclease RuvC (199 aa).

Catalysis depends on residues D7, E68, and D141. D7, E68, and D141 together coordinate Mg(2+).

Belongs to the RuvC family. In terms of assembly, homodimer which binds Holliday junction (HJ) DNA. The HJ becomes 2-fold symmetrical on binding to RuvC with unstacked arms; it has a different conformation from HJ DNA in complex with RuvA. In the full resolvosome a probable DNA-RuvA(4)-RuvB(12)-RuvC(2) complex forms which resolves the HJ. Mg(2+) serves as cofactor.

The protein resides in the cytoplasm. It carries out the reaction Endonucleolytic cleavage at a junction such as a reciprocal single-stranded crossover between two homologous DNA duplexes (Holliday junction).. Its function is as follows. The RuvA-RuvB-RuvC complex processes Holliday junction (HJ) DNA during genetic recombination and DNA repair. Endonuclease that resolves HJ intermediates. Cleaves cruciform DNA by making single-stranded nicks across the HJ at symmetrical positions within the homologous arms, yielding a 5'-phosphate and a 3'-hydroxyl group; requires a central core of homology in the junction. The consensus cleavage sequence is 5'-(A/T)TT(C/G)-3'. Cleavage occurs on the 3'-side of the TT dinucleotide at the point of strand exchange. HJ branch migration catalyzed by RuvA-RuvB allows RuvC to scan DNA until it finds its consensus sequence, where it cleaves and resolves the cruciform DNA. This is Crossover junction endodeoxyribonuclease RuvC from Saccharopolyspora erythraea (strain ATCC 11635 / DSM 40517 / JCM 4748 / NBRC 13426 / NCIMB 8594 / NRRL 2338).